Here is a 185-residue protein sequence, read N- to C-terminus: Threonylcarbamoyl-AMP synthase (185 aa).

A YrdC-like domain is found at 1-185 (MKNFEQVLKA…AKTSQILRQG (185 aa)). The disordered stretch occupies residues 163–185 (ETSGRNKPSEIRDAKTSQILRQG). A compositionally biased stretch (basic and acidic residues) spans 164–177 (TSGRNKPSEIRDAK).

It belongs to the SUA5 family. TsaC subfamily.

It is found in the cytoplasm. The enzyme catalyses L-threonine + hydrogencarbonate + ATP = L-threonylcarbamoyladenylate + diphosphate + H2O. Its function is as follows. Required for the formation of a threonylcarbamoyl group on adenosine at position 37 (t(6)A37) in tRNAs that read codons beginning with adenine. Catalyzes the conversion of L-threonine, HCO(3)(-)/CO(2) and ATP to give threonylcarbamoyl-AMP (TC-AMP) as the acyladenylate intermediate, with the release of diphosphate. This Vibrio campbellii (strain ATCC BAA-1116) protein is Threonylcarbamoyl-AMP synthase.